The chain runs to 207 residues: Large ribosomal subunit protein uL4 (207 aa).

The disordered stretch occupies residues 49 to 79; that stretch reads HKVKSRGEVSGGGKKPWRQKGTGRARAGTSR.

The protein belongs to the universal ribosomal protein uL4 family. Part of the 50S ribosomal subunit.

Its function is as follows. One of the primary rRNA binding proteins, this protein initially binds near the 5'-end of the 23S rRNA. It is important during the early stages of 50S assembly. It makes multiple contacts with different domains of the 23S rRNA in the assembled 50S subunit and ribosome. Forms part of the polypeptide exit tunnel. The protein is Large ribosomal subunit protein uL4 of Heliobacterium modesticaldum (strain ATCC 51547 / Ice1).